The following is a 337-amino-acid chain: GTPase Obg (337 aa).

The 159-residue stretch at 1–159 folds into the Obg domain; the sequence is MKFVDSATIS…FELEMELKLM (159 aa). Residues 160-322 form the OBG-type G domain; the sequence is ADVGLVGFPN…LKDELWRQVS (163 aa). GTP-binding positions include 166 to 173, 191 to 195, 213 to 216, 280 to 283, and 303 to 305; these read GFPNAGKS, FTTLV, DIPG, TKMD, and SSV. The Mg(2+) site is built by Ser173 and Thr193.

The protein belongs to the TRAFAC class OBG-HflX-like GTPase superfamily. OBG GTPase family. In terms of assembly, monomer. Mg(2+) serves as cofactor.

Its subcellular location is the cytoplasm. Functionally, an essential GTPase which binds GTP, GDP and possibly (p)ppGpp with moderate affinity, with high nucleotide exchange rates and a fairly low GTP hydrolysis rate. Plays a role in control of the cell cycle, stress response, ribosome biogenesis and in those bacteria that undergo differentiation, in morphogenesis control. The sequence is that of GTPase Obg from Chlorobium phaeobacteroides (strain DSM 266 / SMG 266 / 2430).